The sequence spans 158 residues: Transcription elongation factor GreA (158 aa).

This sequence belongs to the GreA/GreB family.

Its function is as follows. Necessary for efficient RNA polymerase transcription elongation past template-encoded arresting sites. The arresting sites in DNA have the property of trapping a certain fraction of elongating RNA polymerases that pass through, resulting in locked ternary complexes. Cleavage of the nascent transcript by cleavage factors such as GreA or GreB allows the resumption of elongation from the new 3'terminus. GreA releases sequences of 2 to 3 nucleotides. This Salmonella typhi protein is Transcription elongation factor GreA.